Consider the following 191-residue polypeptide: Fe/S biogenesis protein NfuA (191 aa).

[4Fe-4S] cluster-binding residues include Cys149 and Cys152.

This sequence belongs to the NfuA family. In terms of assembly, homodimer. [4Fe-4S] cluster is required as a cofactor.

Involved in iron-sulfur cluster biogenesis. Binds a 4Fe-4S cluster, can transfer this cluster to apoproteins, and thereby intervenes in the maturation of Fe/S proteins. Could also act as a scaffold/chaperone for damaged Fe/S proteins. The chain is Fe/S biogenesis protein NfuA from Edwardsiella ictaluri (strain 93-146).